A 364-amino-acid chain; its full sequence is Nuclear hormone receptor family member nhr-53 (364 aa).

The segment at residues 20–95 (PSYCLICCEV…VGMQRSSVQQ (76 aa)) is a DNA-binding region (nuclear receptor). 2 NR C4-type zinc fingers span residues 23–43 (CLICCEVADGHHFGAAACRAC) and 59–83 (CPKNGQCFILSNVRNMCRACRYEKC). One can recognise an NR LBD domain in the interval 110 to 363 (REEPVLDTMR…KNLYDMFSPT (254 aa)).

Belongs to the nuclear hormone receptor family.

The protein resides in the nucleus. In terms of biological role, orphan nuclear receptor. The chain is Nuclear hormone receptor family member nhr-53 (nhr-53) from Caenorhabditis elegans.